Here is a 509-residue protein sequence, read N- to C-terminus: Maturase K (509 aa).

This sequence belongs to the intron maturase 2 family. MatK subfamily.

The protein localises to the plastid. Its subcellular location is the chloroplast. In terms of biological role, usually encoded in the trnK tRNA gene intron. Probably assists in splicing its own and other chloroplast group II introns. The chain is Maturase K from Metasequoia glyptostroboides (Dawn redwood).